Here is a 480-residue protein sequence, read N- to C-terminus: Aspartyl/glutamyl-tRNA(Asn/Gln) amidotransferase subunit B (480 aa).

It belongs to the GatB/GatE family. GatB subfamily. Heterotrimer of A, B and C subunits.

The enzyme catalyses L-glutamyl-tRNA(Gln) + L-glutamine + ATP + H2O = L-glutaminyl-tRNA(Gln) + L-glutamate + ADP + phosphate + H(+). It catalyses the reaction L-aspartyl-tRNA(Asn) + L-glutamine + ATP + H2O = L-asparaginyl-tRNA(Asn) + L-glutamate + ADP + phosphate + 2 H(+). Functionally, allows the formation of correctly charged Asn-tRNA(Asn) or Gln-tRNA(Gln) through the transamidation of misacylated Asp-tRNA(Asn) or Glu-tRNA(Gln) in organisms which lack either or both of asparaginyl-tRNA or glutaminyl-tRNA synthetases. The reaction takes place in the presence of glutamine and ATP through an activated phospho-Asp-tRNA(Asn) or phospho-Glu-tRNA(Gln). The chain is Aspartyl/glutamyl-tRNA(Asn/Gln) amidotransferase subunit B from Hahella chejuensis (strain KCTC 2396).